We begin with the raw amino-acid sequence, 440 residues long: Protein ABHD8 (440 aa).

Residues 123-158 (DPAGSDGRSAPGSGSGSGSGSGSGGRRRRARRPKRT) are disordered. Residues 124–134 (PAGSDGRSAPG) show a composition bias toward low complexity. Positions 135–146 (SGSGSGSGSGSG) are enriched in gly residues. Positions 147 to 158 (GRRRRARRPKRT) are enriched in basic residues. Residues 178-280 (VLFFIHGVGG…HKVIMINGGG (103 aa)) form the AB hydrolase-1 domain. Active-site charge relay system residues include Ser253, Asp371, and His399.

This sequence belongs to the AB hydrolase superfamily. Interacts with NLRP3 (via NACHT and LLR domains); this interaction is enhanced in the presence of NLRP3 inflammasome inducers, such as ATP, nigericin, silica, or alum. Interacts with ZDHHC12.

Its subcellular location is the cytoplasm. Its function is as follows. Negatively regulates NLRP3-driven inflammation. Promotes NLRP3 degradation through the chaperone-mediated autophagy (CMA) pathway, hence attenuating inflammasome activation and IL1B secretion. Acts by recruiting palmitoyltransferase ZDHHC12 to NLRP3, facilitating NLRP3 palmitoylation and subsequent degradation. The polypeptide is Protein ABHD8 (Macaca fascicularis (Crab-eating macaque)).